A 722-amino-acid chain; its full sequence is MLQPSAQGSYSKAVLSTFRSLEDLTCDGSKIILDGQSLNVSSVVAAACHQVPASISKDPQLHARLRESVELLARKLAEGEIVYGVNTGFGGSADTRTDDYSTLQQALVQHQASGVLLPTDRSSSRPSSRYPHGLRSHSMPTAVVKAAMLVRCNSLLRGHSAVRPEVIEHILAFLRSGLIPVVPVRGSISASGDLSPLSYIANALEGNPDIAIQNEATGDVIRADEALQQLGLAPLRFGPKEGLGLLNGTAFSAGAASLVLFEANQLVLLSQVLTAMGTEALAGSTGNYHPFIAGVRPHRGQIEAAGNIFHFLRDSRMATSPGADGASHSSSLAQDRYALRTASQWIGPQIEDMSLASEQVHCELNSTTDNPLLDPGSGHMHHGGNFQATSITSAMEKTMSAMQMLGRMIFSQCTELINPALNNGLPPNLSFDDPSLSFTMKGIDINMSAYMAELSYLNHHVSNHVQSAEMHNQGLNSLALVASRYAAETVEVLSLMASAYLYALCQALDLRACHLEFLRNARSTVDSLTAELCLSFSPLLSESDQRQIQDSTWEQLLHHWNRSSTSDLHDRSRNAASHTMGALVELLPMQLNEATALPTRLAPQQQWLDEVSATLAGSYDATRAKFQSNPTTPFYLCSASRRMYEFVRKGLGVPLHRGIVDHPTYPSVTEEHAGQELIGSQVSKIYMALRGGVFRDVLQDCWYSSDSVRGFAGEELVLASKL.

Residue Tyr83 is the Proton donor/acceptor of the active site. The tract at residues 117-136 (LPTDRSSSRPSSRYPHGLRS) is disordered. A cross-link (5-imidazolinone (Ala-Gly)) is located at residues 190–192 (ASG). At Ser191 the chain carries 2,3-didehydroalanine (Ser). (E)-cinnamate contacts are provided by Asn247, Gln334, Arg340, Asn370, Lys441, Glu469, and Asn472.

It belongs to the PAL/histidase family. In terms of processing, contains an active site 4-methylidene-imidazol-5-one (MIO), which is formed autocatalytically by cyclization and dehydration of residues Ala-Ser-Gly.

It catalyses the reaction L-phenylalanine = (E)-cinnamate + NH4(+). Its pathway is alkaloid biosynthesis. Functionally, phenylalanine ammonia-lyase; part of the gene cluster that mediates the biosynthesis of the ergot alkaloids lentopeptins A and B. Within the pathway, lenB provides the cinnamic acid starter unit for the synthesis of the N-acyldiketopiperazine intermediate by the NRPS lenA. Cinnamic acid is condensed with the Ala-Val-Ala peptide chain by lenA which leads to the N-acyldiketopiperazine intermediate which in turn is converted into lentopeptins A and B by the cytochrome P450 monooxygenase lenC. The polypeptide is Phenylalanine ammonia-lyase lenB (Aspergillus lentulus).